A 131-amino-acid chain; its full sequence is Small ribosomal subunit protein uS8 (131 aa).

It belongs to the universal ribosomal protein uS8 family. As to quaternary structure, part of the 30S ribosomal subunit. Contacts proteins S5 and S12.

Its function is as follows. One of the primary rRNA binding proteins, it binds directly to 16S rRNA central domain where it helps coordinate assembly of the platform of the 30S subunit. The sequence is that of Small ribosomal subunit protein uS8 from Pelagibacter ubique (strain HTCC1062).